The primary structure comprises 124 residues: Small ribosomal subunit protein uS12 (124 aa).

A disordered region spans residues 1 to 30 (MPTIQQLVRKGRRDKVAKVKTAALKGSPQR). Aspartate 89 is subject to 3-methylthioaspartic acid. Residues 105–124 (QGVKNRKQARSRYGAKKEKS) form a disordered region. The span at 108-118 (KNRKQARSRYG) shows a compositional bias: basic residues.

The protein belongs to the universal ribosomal protein uS12 family. In terms of assembly, part of the 30S ribosomal subunit. Contacts proteins S8 and S17. May interact with IF1 in the 30S initiation complex.

In terms of biological role, with S4 and S5 plays an important role in translational accuracy. Functionally, interacts with and stabilizes bases of the 16S rRNA that are involved in tRNA selection in the A site and with the mRNA backbone. Located at the interface of the 30S and 50S subunits, it traverses the body of the 30S subunit contacting proteins on the other side and probably holding the rRNA structure together. The combined cluster of proteins S8, S12 and S17 appears to hold together the shoulder and platform of the 30S subunit. This chain is Small ribosomal subunit protein uS12, found in Mycobacterium intracellulare.